Consider the following 173-residue polypeptide: Protein-export protein SecB (173 aa).

Belongs to the SecB family. In terms of assembly, homotetramer, a dimer of dimers. One homotetramer interacts with 1 SecA dimer.

Its subcellular location is the cytoplasm. Functionally, one of the proteins required for the normal export of preproteins out of the cell cytoplasm. It is a molecular chaperone that binds to a subset of precursor proteins, maintaining them in a translocation-competent state. It also specifically binds to its receptor SecA. In Ralstonia nicotianae (strain ATCC BAA-1114 / GMI1000) (Ralstonia solanacearum), this protein is Protein-export protein SecB.